Consider the following 304-residue polypeptide: Xylanase inhibitor protein 1 (304 aa).

The N-terminal stretch at 1-29 (MVALGRRSWLVPLAMVLAVSSCLAGPAMA) is a signal peptide. The 271-residue stretch at 34–304 (GQMTVFWGRN…GYGKTVKYWA (271 aa)) folds into the GH18 domain. 2 disulfide bridges follow: Cys53–Cys93 and Cys190–Cys219.

The protein belongs to the glycosyl hydrolase 18 family. Xylanase inhibitor subfamily. Binds to fungal GH11 xylanases. Constitutively expressed in shoots.

It is found in the secreted. In terms of biological role, fungal xylanase inhibitor. Possesses competitive inhibiting activity against fungal endo-1,4-beta-D-xylanases belonging to glycoside hydrolase family 11 (GH11). May function in plant defense against secreted fungal pathogen xylanases. Is similar to class III chitinases, but does not exhibit chitinase activity. The polypeptide is Xylanase inhibitor protein 1 (Oryza sativa subsp. japonica (Rice)).